A 443-amino-acid chain; its full sequence is 3-ketoacyl-CoA thiolase 1, peroxisomal (443 aa).

Residues Met1–Cys30 constitute a peroxisome transit peptide. Cys130 (acyl-thioester intermediate) is an active-site residue. Residues His385 and Cys417 each act as proton acceptor in the active site.

This sequence belongs to the thiolase-like superfamily. Thiolase family. Homodimer. As to expression, low levels in seedlings and leaves.

Its subcellular location is the peroxisome. It catalyses the reaction an acyl-CoA + acetyl-CoA = a 3-oxoacyl-CoA + CoA. It participates in lipid metabolism; fatty acid metabolism. In terms of biological role, involved in fatty-acid beta-oxidation prior to gluconeogenesis during germination and subsequent seedling growth. Implicated in jasmonic acid (JA) biosynthesis. The chain is 3-ketoacyl-CoA thiolase 1, peroxisomal (KAT1) from Arabidopsis thaliana (Mouse-ear cress).